A 223-amino-acid polypeptide reads, in one-letter code: MIF4G domain-containing protein B (223 aa).

The region spanning 9-206 (DYKIQGFDAD…LEMIEYRAAG (198 aa)) is the MIF4G domain.

Belongs to the MIF4GD family. Interacts with eif4g1, eif4g2 and slbp; probably tethered by SLBP to the 3'-end of mRNAs ending with the histone stem-loop, it also interacts with eif4g1 which is bound to their 5'-end.

It localises to the cytoplasm. The protein resides in the nucleus. Functions in replication-dependent translation of histone mRNAs which differ from other eukaryotic mRNAs in that they do not end with a poly-A tail but a stem-loop. May participate in circularizing those mRNAs specifically enhancing their translation. This Xenopus laevis (African clawed frog) protein is MIF4G domain-containing protein B (mif4gd-b).